The following is a 479-amino-acid chain: GTPase Obg (479 aa).

The Obg domain occupies 2-159; the sequence is PRFVDRVVIH…RDLTLELKTV (158 aa). The OBG-type G domain occupies 160 to 340; sequence ADVGLVGFPS…LIFGLWQMVS (181 aa). GTP contacts are provided by residues 166-173, 191-195, 212-215, 292-295, and 321-323; these read GFPSAGKS, FTTLV, DVPG, NKID, and STV. Mg(2+)-binding residues include serine 173 and threonine 193. The region spanning 358 to 436 is the OCT domain; that stretch reads PVPVDDSGFD…IGEMTFDWEP (79 aa). The tract at residues 438-479 is disordered; that stretch reads TPAGGHVAMSGRGTDVRLERSDRVGAAERKAARRQRRERDDD. A compositionally biased stretch (basic and acidic residues) spans 451–467; that stretch reads TDVRLERSDRVGAAERK.

This sequence belongs to the TRAFAC class OBG-HflX-like GTPase superfamily. OBG GTPase family. In terms of assembly, monomer. The cofactor is Mg(2+).

The protein localises to the cytoplasm. Its function is as follows. An essential GTPase which binds GTP, GDP and possibly (p)ppGpp with moderate affinity, with high nucleotide exchange rates and a fairly low GTP hydrolysis rate. Plays a role in control of the cell cycle, stress response, ribosome biogenesis and in those bacteria that undergo differentiation, in morphogenesis control. This Mycobacterium ulcerans (strain Agy99) protein is GTPase Obg.